The following is a 337-amino-acid chain: Putative long-chain-alcohol O-fatty-acyltransferase 10 (337 aa).

Helical transmembrane passes span serine 7 to serine 27, serine 38 to phenylalanine 58, serine 59 to phenylalanine 79, glycine 82 to isoleucine 102, isoleucine 142 to isoleucine 162, methionine 228 to isoleucine 248, threonine 254 to valine 274, and methionine 285 to glycine 305.

It belongs to the wax synthase family.

The protein resides in the membrane. It catalyses the reaction a long chain fatty alcohol + a fatty acyl-CoA = a wax ester + CoA. In terms of biological role, catalyzes the final step in the synthesis of long-chain linear esters (waxes). This chain is Putative long-chain-alcohol O-fatty-acyltransferase 10, found in Arabidopsis thaliana (Mouse-ear cress).